The primary structure comprises 90 residues: Spore coat protein F-like protein YgzC (90 aa).

It belongs to the CotF family.

Its subcellular location is the spore coat. The chain is Spore coat protein F-like protein YgzC (ygzC) from Bacillus subtilis (strain 168).